The chain runs to 37 residues: Large ribosomal subunit protein bL36 (37 aa).

This sequence belongs to the bacterial ribosomal protein bL36 family.

The chain is Large ribosomal subunit protein bL36 from Chromobacterium violaceum (strain ATCC 12472 / DSM 30191 / JCM 1249 / CCUG 213 / NBRC 12614 / NCIMB 9131 / NCTC 9757 / MK).